The primary structure comprises 612 residues: Threonine--tRNA ligase (612 aa).

Residues D218–P509 are catalytic. C310, H361, and H486 together coordinate Zn(2+).

It belongs to the class-II aminoacyl-tRNA synthetase family. Homodimer. The cofactor is Zn(2+).

Its subcellular location is the cytoplasm. It carries out the reaction tRNA(Thr) + L-threonine + ATP = L-threonyl-tRNA(Thr) + AMP + diphosphate + H(+). Functionally, catalyzes the attachment of threonine to tRNA(Thr) in a two-step reaction: L-threonine is first activated by ATP to form Thr-AMP and then transferred to the acceptor end of tRNA(Thr). Also edits incorrectly charged L-seryl-tRNA(Thr). The polypeptide is Threonine--tRNA ligase (Helicobacter pylori (strain G27)).